A 147-amino-acid polypeptide reads, in one-letter code: UPF0735 ACT domain-containing protein RBAM_024960 (147 aa).

The 76-residue stretch at 70–145 folds into the ACT domain; it reads TLFFHLEDRS…FIEKVEILGS (76 aa).

Belongs to the UPF0735 family.

In Bacillus velezensis (strain DSM 23117 / BGSC 10A6 / LMG 26770 / FZB42) (Bacillus amyloliquefaciens subsp. plantarum), this protein is UPF0735 ACT domain-containing protein RBAM_024960.